The sequence spans 159 residues: UPF0178 protein AZC_4000 (159 aa).

It belongs to the UPF0178 family.

This chain is UPF0178 protein AZC_4000, found in Azorhizobium caulinodans (strain ATCC 43989 / DSM 5975 / JCM 20966 / LMG 6465 / NBRC 14845 / NCIMB 13405 / ORS 571).